The chain runs to 338 residues: UDP-glucose 4-epimerase (338 aa).

NAD(+)-binding positions include 11–12, 31–36, 58–59, 80–84, asparagine 99, serine 124, tyrosine 149, lysine 153, and phenylalanine 178; these read FI, DNLCNS, DI, and FAGLK. Substrate is bound by residues serine 124 and tyrosine 149. Tyrosine 149 (proton acceptor) is an active-site residue. Residues asparagine 179, 199–200, 216–218, arginine 231, and 292–295 each bind substrate; these read NL, SVF, and RAGD.

Belongs to the NAD(P)-dependent epimerase/dehydratase family. As to quaternary structure, homodimer. Requires NAD(+) as cofactor.

The catalysed reaction is UDP-alpha-D-glucose = UDP-alpha-D-galactose. It functions in the pathway carbohydrate metabolism; galactose metabolism. Functionally, involved in the metabolism of galactose. Plays an essential role in the incorporation of galactose into meningococcal lipopolysaccharide surface molecules, which are important for pathogenesis. Catalyzes the conversion of UDP-galactose (UDP-Gal) to UDP-glucose (UDP-Glc) through a mechanism involving the transient reduction of NAD. In Neisseria gonorrhoeae, this protein is UDP-glucose 4-epimerase (galE).